Here is a 614-residue protein sequence, read N- to C-terminus: Vitamin B12 transporter BtuB (614 aa).

The N-terminal stretch at Met-1 to Ala-20 is a signal peptide. Residues Asp-26 to Ile-33 carry the TonB box motif. Positions Pro-38–Thr-152 constitute a TBDR plug domain. Cyanocob(III)alamin contacts are provided by residues Leu-83, Ser-85, Asn-92, and Val-110 to Ser-111. In terms of domain architecture, TBDR beta-barrel spans Glu-155–Phe-614. A run of 3 beta stranded transmembrane segments spans residues Thr-158 to Gly-165, Tyr-169 to Gln-178, and Thr-184 to Thr-195. The Ca(2+) site is built by Asp-199, Gln-211, Asp-213, and Asp-215. The next 2 beta stranded transmembrane spans lie at Phe-217–Glu-227 and Asp-232–Asn-248. Residues Tyr-249 and Asp-250 each coordinate Ca(2+). Cyanocob(III)alamin is bound at residue Ala-251. Asp-261 is a binding site for Ca(2+). 14 beta stranded membrane-spanning segments follow: residues Arg-263–Asn-277, Glu-279–Asn-296, Thr-309–Ile-325, His-328–Trp-337, Tyr-353–Gly-369, Phe-371–Asp-381, Phe-385–Ile-400, Tyr-403–Asn-417, Lys-434–Glu-443, Val-449–Asn-458, Tyr-473–Phe-490, Pro-494–Ala-509, Arg-517–Trp-529, and Asp-535–Asp-550. A cyanocob(III)alamin-binding site is contributed by Thr-309. Residue Arg-517 coordinates cyanocob(III)alamin. Cyanocob(III)alamin is bound at residue Tyr-551. The next 3 beta stranded transmembrane spans lie at Thr-558–Ala-572, Ile-585–Val-596, and Ala-602–Phe-614. Residues Tyr-597–Phe-614 carry the TonB C-terminal box motif.

It belongs to the TonB-dependent receptor family. BtuB (TC 1.B.14.3.1) subfamily.

The protein localises to the cell outer membrane. Functionally, involved in the active translocation of vitamin B12 (cyanocobalamin) across the outer membrane to the periplasmic space. It derives its energy for transport by interacting with the trans-periplasmic membrane protein TonB. This chain is Vitamin B12 transporter BtuB, found in Shigella flexneri serotype 5b (strain 8401).